The sequence spans 603 residues: Probable methyltransferase PMT4 (603 aa).

Residues methionine 1–arginine 12 lie on the Cytoplasmic side of the membrane. The helical; Signal-anchor for type II membrane protein transmembrane segment at isoleucine 13–asparagine 33 threads the bilayer. Residues serine 34–lysine 603 are Lumenal-facing. 2 N-linked (GlcNAc...) asparagine glycosylation sites follow: asparagine 96 and asparagine 393.

It belongs to the methyltransferase superfamily.

The protein localises to the endoplasmic reticulum membrane. The protein is Probable methyltransferase PMT4 of Arabidopsis thaliana (Mouse-ear cress).